We begin with the raw amino-acid sequence, 327 residues long: GMP reductase (327 aa).

Catalysis depends on Cys-175, which acts as the Thioimidate intermediate. Ile-204 to Val-227 is a binding site for NADP(+).

It belongs to the IMPDH/GMPR family. GuaC type 2 subfamily.

The catalysed reaction is IMP + NH4(+) + NADP(+) = GMP + NADPH + 2 H(+). In terms of biological role, catalyzes the irreversible NADPH-dependent deamination of GMP to IMP. It functions in the conversion of nucleobase, nucleoside and nucleotide derivatives of G to A nucleotides, and in maintaining the intracellular balance of A and G nucleotides. This chain is GMP reductase, found in Bacillus anthracis.